An 83-amino-acid chain; its full sequence is Small ribosomal subunit protein eS21 (83 aa).

Belongs to the eukaryotic ribosomal protein eS21 family. In terms of assembly, component of the 40S small ribosomal subunit. Interacts with sta.

Its subcellular location is the cytoplasm. It localises to the cytosol. The protein localises to the rough endoplasmic reticulum. May be an associated component of the ribosome rather than a core structural subunit. May act as a translation initiation factor. Has a role in regulation of cell proliferation in the hematopoietic organs and the imaginal disks of larva. The polypeptide is Small ribosomal subunit protein eS21 (RpS21) (Drosophila simulans (Fruit fly)).